A 451-amino-acid chain; its full sequence is Protease RseP (451 aa).

Histidine 22 provides a ligand contact to Zn(2+). The active site involves glutamate 23. Position 26 (histidine 26) interacts with Zn(2+). A helical membrane pass occupies residues 98–120 (AAIVSAGPIANFLFAIVAYWLVF). PDZ domains are found at residues 115–186 (AYWL…APFG) and 199–280 (QWQF…ERES). Helical transmembrane passes span 377–399 (LVYY…LFPL) and 427–446 (FSYR…ALFN).

It belongs to the peptidase M50B family. As to quaternary structure, interacts with RseA. Zn(2+) serves as cofactor.

The protein localises to the cell inner membrane. A site-2 regulated intramembrane protease (S2P) that cleaves the peptide bond between 'Ala-108' and 'Cys-109' in the transmembrane region of RseA. Part of a regulated intramembrane proteolysis (RIP) cascade. Acts on DegS-cleaved RseA to release the cytoplasmic domain of RseA. This provides the cell with sigma-E (RpoE) activity through the proteolysis of RseA. This chain is Protease RseP (rseP), found in Yersinia pestis.